A 543-amino-acid chain; its full sequence is Methionine--tRNA ligase (543 aa).

The short motif at 13–23 (PYANGPLHVGH) is the 'HIGH' region element. Residues cysteine 145, cysteine 148, cysteine 158, and cysteine 161 each coordinate Zn(2+). Residues 334-338 (QFSKS) carry the 'KMSKS' region motif. Lysine 337 contacts ATP.

The protein belongs to the class-I aminoacyl-tRNA synthetase family. MetG type 1 subfamily. Requires Zn(2+) as cofactor.

The protein resides in the cytoplasm. The enzyme catalyses tRNA(Met) + L-methionine + ATP = L-methionyl-tRNA(Met) + AMP + diphosphate. Is required not only for elongation of protein synthesis but also for the initiation of all mRNA translation through initiator tRNA(fMet) aminoacylation. The sequence is that of Methionine--tRNA ligase from Thermoplasma volcanium (strain ATCC 51530 / DSM 4299 / JCM 9571 / NBRC 15438 / GSS1).